The chain runs to 291 residues: MEMO1 family protein TK1477 (291 aa).

The protein belongs to the MEMO1 family.

The chain is MEMO1 family protein TK1477 from Thermococcus kodakarensis (strain ATCC BAA-918 / JCM 12380 / KOD1) (Pyrococcus kodakaraensis (strain KOD1)).